A 153-amino-acid polypeptide reads, in one-letter code: Ribosome maturation factor RimP (153 aa).

Belongs to the RimP family.

The protein localises to the cytoplasm. Its function is as follows. Required for maturation of 30S ribosomal subunits. The sequence is that of Ribosome maturation factor RimP from Clostridioides difficile (strain 630) (Peptoclostridium difficile).